Consider the following 358-residue polypeptide: Peptide chain release factor 1 (358 aa).

At Q233 the chain carries N5-methylglutamine.

This sequence belongs to the prokaryotic/mitochondrial release factor family. In terms of processing, methylated by PrmC. Methylation increases the termination efficiency of RF1.

The protein localises to the cytoplasm. Functionally, peptide chain release factor 1 directs the termination of translation in response to the peptide chain termination codons UAG and UAA. This chain is Peptide chain release factor 1, found in Macrococcus caseolyticus (strain JCSC5402) (Macrococcoides caseolyticum).